Consider the following 483-residue polypeptide: Glutamyl-tRNA(Gln) amidotransferase subunit A (483 aa).

Catalysis depends on charge relay system residues Lys-76 and Ser-151. The Acyl-ester intermediate role is filled by Ser-175.

This sequence belongs to the amidase family. GatA subfamily. In terms of assembly, heterotrimer of A, B and C subunits.

The catalysed reaction is L-glutamyl-tRNA(Gln) + L-glutamine + ATP + H2O = L-glutaminyl-tRNA(Gln) + L-glutamate + ADP + phosphate + H(+). Allows the formation of correctly charged Gln-tRNA(Gln) through the transamidation of misacylated Glu-tRNA(Gln) in organisms which lack glutaminyl-tRNA synthetase. The reaction takes place in the presence of glutamine and ATP through an activated gamma-phospho-Glu-tRNA(Gln). In Pseudomonas putida (strain GB-1), this protein is Glutamyl-tRNA(Gln) amidotransferase subunit A.